The sequence spans 524 residues: uncharacterized protein (524 aa).

The N-terminal stretch at 1–26 is a signal peptide; sequence MLKIDMWFKLKSLGFSLISLQALLAS. Residue Cys-27 is the site of N-palmitoyl cysteine attachment. Cys-27 is lipidated: S-diacylglycerol cysteine. The disordered stretch occupies residues 37 to 68; that stretch reads IEEKNDSTTDNNATPFKDEQSDQGTEVNQQPK. The segment covering 58–68 has biased composition (polar residues); the sequence is DQGTEVNQQPK.

It belongs to the MG067/MG068/MG395 family.

Its subcellular location is the cell membrane. This is an uncharacterized protein from Mycoplasma genitalium (strain ATCC 33530 / DSM 19775 / NCTC 10195 / G37) (Mycoplasmoides genitalium).